Reading from the N-terminus, the 102-residue chain is Large ribosomal subunit protein uL24 (102 aa).

This sequence belongs to the universal ribosomal protein uL24 family. Part of the 50S ribosomal subunit.

Its function is as follows. One of two assembly initiator proteins, it binds directly to the 5'-end of the 23S rRNA, where it nucleates assembly of the 50S subunit. In terms of biological role, one of the proteins that surrounds the polypeptide exit tunnel on the outside of the subunit. This is Large ribosomal subunit protein uL24 from Herpetosiphon aurantiacus (strain ATCC 23779 / DSM 785 / 114-95).